The primary structure comprises 674 residues: L-type lectin-domain containing receptor kinase IV.3 (674 aa).

A signal peptide spans 1–22; it reads MFFKLFTIFFFFIILLSKPLNS. 6 N-linked (GlcNAc...) asparagine glycosylation sites follow: N21, N28, N40, N81, N136, and N188. The Extracellular segment spans residues 23–296; sequence SSQSLNFTYN…TSLQRFYKNR (274 aa). Residues 26 to 263 are legume-lectin like; it reads SLNFTYNSFH…SEHFVFGWSF (238 aa). A helical transmembrane segment spans residues 297–317; the sequence is MPLFSLLLIPVLFVVSLIFLV. At 318–674 the chain is on the cytoplasmic side; that stretch reads RFIVRRRRKF…IAYSIVSGGR (357 aa). Residues 355-632 enclose the Protein kinase domain; sequence FKDKDLLGSG…LQYLRGDATL (278 aa). ATP is bound by residues 361 to 369 and K384; that span reads LGSGGFGRV. D480 serves as the catalytic Proton acceptor.

It in the C-terminal section; belongs to the protein kinase superfamily. Ser/Thr protein kinase family. This sequence in the N-terminal section; belongs to the leguminous lectin family.

Its subcellular location is the cell membrane. The catalysed reaction is L-seryl-[protein] + ATP = O-phospho-L-seryl-[protein] + ADP + H(+). The enzyme catalyses L-threonyl-[protein] + ATP = O-phospho-L-threonyl-[protein] + ADP + H(+). The polypeptide is L-type lectin-domain containing receptor kinase IV.3 (LECRK43) (Arabidopsis thaliana (Mouse-ear cress)).